A 236-amino-acid polypeptide reads, in one-letter code: 2-C-methyl-D-erythritol 4-phosphate cytidylyltransferase (236 aa).

Belongs to the IspD/TarI cytidylyltransferase family. IspD subfamily. In terms of assembly, homodimer.

The enzyme catalyses 2-C-methyl-D-erythritol 4-phosphate + CTP + H(+) = 4-CDP-2-C-methyl-D-erythritol + diphosphate. It functions in the pathway isoprenoid biosynthesis; isopentenyl diphosphate biosynthesis via DXP pathway; isopentenyl diphosphate from 1-deoxy-D-xylulose 5-phosphate: step 2/6. In terms of biological role, catalyzes the formation of 4-diphosphocytidyl-2-C-methyl-D-erythritol from CTP and 2-C-methyl-D-erythritol 4-phosphate (MEP). In Escherichia coli O45:K1 (strain S88 / ExPEC), this protein is 2-C-methyl-D-erythritol 4-phosphate cytidylyltransferase.